The following is a 273-amino-acid chain: 4-hydroxy-tetrahydrodipicolinate reductase (273 aa).

NAD(+) is bound by residues 12–17 (GAGGRM) and E38. R39 is an NADP(+) binding site. Residues 102–104 (GTT) and 126–129 (AANF) each bind NAD(+). H159 serves as the catalytic Proton donor/acceptor. (S)-2,3,4,5-tetrahydrodipicolinate is bound at residue H160. The active-site Proton donor is K163. (S)-2,3,4,5-tetrahydrodipicolinate is bound at residue 169 to 170 (GT).

It belongs to the DapB family. Homotetramer.

It is found in the cytoplasm. The enzyme catalyses (S)-2,3,4,5-tetrahydrodipicolinate + NAD(+) + H2O = (2S,4S)-4-hydroxy-2,3,4,5-tetrahydrodipicolinate + NADH + H(+). It catalyses the reaction (S)-2,3,4,5-tetrahydrodipicolinate + NADP(+) + H2O = (2S,4S)-4-hydroxy-2,3,4,5-tetrahydrodipicolinate + NADPH + H(+). It participates in amino-acid biosynthesis; L-lysine biosynthesis via DAP pathway; (S)-tetrahydrodipicolinate from L-aspartate: step 4/4. Catalyzes the conversion of 4-hydroxy-tetrahydrodipicolinate (HTPA) to tetrahydrodipicolinate. The chain is 4-hydroxy-tetrahydrodipicolinate reductase from Yersinia enterocolitica serotype O:8 / biotype 1B (strain NCTC 13174 / 8081).